We begin with the raw amino-acid sequence, 329 residues long: Delta-aminolevulinic acid dehydratase (329 aa).

Zn(2+) is bound by residues cysteine 122, cysteine 124, histidine 131, and cysteine 132. Lysine 199 serves as the catalytic Schiff-base intermediate with substrate. Lysine 199 bears the N6-succinyllysine mark. Arginine 209 provides a ligand contact to 5-aminolevulinate. Serine 215 carries the post-translational modification Phosphoserine. Arginine 221 is a binding site for 5-aminolevulinate. Cysteine 223 contributes to the Zn(2+) binding site. The active-site Schiff-base intermediate with substrate is the lysine 252. Lysine 252 carries the N6-succinyllysine modification. 5-aminolevulinate-binding residues include serine 279 and tyrosine 318.

The protein belongs to the ALAD family. In terms of assembly, homooctamer; active form. Homohexamer; low activity form. It depends on Zn(2+) as a cofactor.

It is found in the cytoplasm. The protein resides in the cytosol. The catalysed reaction is 2 5-aminolevulinate = porphobilinogen + 2 H2O + H(+). Its pathway is porphyrin-containing compound metabolism; protoporphyrin-IX biosynthesis; coproporphyrinogen-III from 5-aminolevulinate: step 1/4. Its activity is regulated as follows. Can alternate between a fully active homooctamer and a low-activity homohexamer. A bound magnesium ion may promote the assembly of the fully active homooctamer. The magnesium-binding site is absent in the low-activity homohexamer. Inhibited by compounds that favor the hexameric state. Inhibited by divalent lead ions. The lead ions partially displace the zinc cofactor. Its function is as follows. Catalyzes an early step in the biosynthesis of tetrapyrroles. Binds two molecules of 5-aminolevulinate per subunit, each at a distinct site, and catalyzes their condensation to form porphobilinogen. The protein is Delta-aminolevulinic acid dehydratase (ALAD) of Bos taurus (Bovine).